The chain runs to 180 residues: Ribulose bisphosphate carboxylase small subunit, chloroplastic (180 aa).

Residues 1–57 (MVSSMMVSSAATFTRASPAQSSMVAPFTGLKSASAFPVTRKPNADLSHLPSNGGRVQ) constitute a chloroplast transit peptide.

This sequence belongs to the RuBisCO small chain family. In terms of assembly, heterohexadecamer of 8 large and 8 small subunits.

It localises to the plastid. Its subcellular location is the chloroplast. Functionally, ruBisCO catalyzes two reactions: the carboxylation of D-ribulose 1,5-bisphosphate, the primary event in carbon dioxide fixation, as well as the oxidative fragmentation of the pentose substrate. Both reactions occur simultaneously and in competition at the same active site. Although the small subunit is not catalytic it is essential for maximal activity. In Musa acuminata (Banana), this protein is Ribulose bisphosphate carboxylase small subunit, chloroplastic.